The primary structure comprises 989 residues: Phosphoenolpyruvate carboxylase (989 aa).

Active-site residues include His175 and Lys630.

Belongs to the PEPCase type 1 family. The cofactor is Mg(2+).

It carries out the reaction oxaloacetate + phosphate = phosphoenolpyruvate + hydrogencarbonate. Its function is as follows. Forms oxaloacetate, a four-carbon dicarboxylic acid source for the tricarboxylic acid cycle. In Prochlorococcus marinus (strain MIT 9301), this protein is Phosphoenolpyruvate carboxylase.